The sequence spans 525 residues: GMP synthase [glutamine-hydrolyzing] (525 aa).

One can recognise a Glutamine amidotransferase type-1 domain in the interval 9–207 (RILILDFGSQ…VLDICGCDAL (199 aa)). C86 functions as the Nucleophile in the catalytic mechanism. Residues H181 and E183 contribute to the active site. A GMPS ATP-PPase domain is found at 208-400 (WTSAAIIEDT…LGLPYDMLYR (193 aa)). 235–241 (SGGVDSS) is a binding site for ATP.

In terms of assembly, homodimer.

The enzyme catalyses XMP + L-glutamine + ATP + H2O = GMP + L-glutamate + AMP + diphosphate + 2 H(+). It functions in the pathway purine metabolism; GMP biosynthesis; GMP from XMP (L-Gln route): step 1/1. In terms of biological role, catalyzes the synthesis of GMP from XMP. The polypeptide is GMP synthase [glutamine-hydrolyzing] (Proteus mirabilis (strain HI4320)).